The primary structure comprises 145 residues: Phosphoribosyl-AMP cyclohydrolase (145 aa).

Mg(2+) is bound at residue aspartate 87. A Zn(2+)-binding site is contributed by cysteine 88. 2 residues coordinate Mg(2+): aspartate 89 and aspartate 91. Positions 104 and 111 each coordinate Zn(2+).

This sequence belongs to the PRA-CH family. In terms of assembly, homodimer. It depends on Mg(2+) as a cofactor. Requires Zn(2+) as cofactor.

The protein localises to the cytoplasm. It catalyses the reaction 1-(5-phospho-beta-D-ribosyl)-5'-AMP + H2O = 1-(5-phospho-beta-D-ribosyl)-5-[(5-phospho-beta-D-ribosylamino)methylideneamino]imidazole-4-carboxamide. Its pathway is amino-acid biosynthesis; L-histidine biosynthesis; L-histidine from 5-phospho-alpha-D-ribose 1-diphosphate: step 3/9. Functionally, catalyzes the hydrolysis of the adenine ring of phosphoribosyl-AMP. The polypeptide is Phosphoribosyl-AMP cyclohydrolase (Nitrobacter winogradskyi (strain ATCC 25391 / DSM 10237 / CIP 104748 / NCIMB 11846 / Nb-255)).